The chain runs to 376 residues: Serine/threonine-protein kinase-transforming protein mos (376 aa).

The 283-residue stretch at 94 to 376 (VCLMHRLGSG…KALADSIEPM (283 aa)) folds into the Protein kinase domain. Residues 100–108 (LGSGGFGSV) and K121 each bind ATP. D229 (proton acceptor) is an active-site residue.

Belongs to the protein kinase superfamily. Ser/Thr protein kinase family.

It catalyses the reaction L-seryl-[protein] + ATP = O-phospho-L-seryl-[protein] + ADP + H(+). It carries out the reaction L-threonyl-[protein] + ATP = O-phospho-L-threonyl-[protein] + ADP + H(+). The sequence is that of Serine/threonine-protein kinase-transforming protein mos (V-MOS) from Moloney murine sarcoma virus (strain m1) (MoMSV).